The chain runs to 158 residues: 2-C-methyl-D-erythritol 2,4-cyclodiphosphate synthase (158 aa).

2 residues coordinate a divalent metal cation: D9 and H11. 4-CDP-2-C-methyl-D-erythritol 2-phosphate-binding positions include 9 to 11 (DVH) and 35 to 36 (HS). H43 lines the a divalent metal cation pocket. 4-CDP-2-C-methyl-D-erythritol 2-phosphate-binding positions include 57-59 (DIG), 62-66 (FPDTD), 101-107 (AQKPKMA), 133-136 (TTTE), F140, and R143.

Belongs to the IspF family. In terms of assembly, homotrimer. Requires a divalent metal cation as cofactor.

It carries out the reaction 4-CDP-2-C-methyl-D-erythritol 2-phosphate = 2-C-methyl-D-erythritol 2,4-cyclic diphosphate + CMP. It participates in isoprenoid biosynthesis; isopentenyl diphosphate biosynthesis via DXP pathway; isopentenyl diphosphate from 1-deoxy-D-xylulose 5-phosphate: step 4/6. Its function is as follows. Involved in the biosynthesis of isopentenyl diphosphate (IPP) and dimethylallyl diphosphate (DMAPP), two major building blocks of isoprenoid compounds. Catalyzes the conversion of 4-diphosphocytidyl-2-C-methyl-D-erythritol 2-phosphate (CDP-ME2P) to 2-C-methyl-D-erythritol 2,4-cyclodiphosphate (ME-CPP) with a corresponding release of cytidine 5-monophosphate (CMP). This is 2-C-methyl-D-erythritol 2,4-cyclodiphosphate synthase from Bacillus cytotoxicus (strain DSM 22905 / CIP 110041 / 391-98 / NVH 391-98).